A 331-amino-acid chain; its full sequence is Putative type II secretion system C-type protein YghF (331 aa).

A helical transmembrane segment spans residues 44–60 (MFWLMLLIISAKMAHSL).

Belongs to the GSP C family.

Its subcellular location is the cell inner membrane. Its function is as follows. Involved in a type II secretion system (T2SS, formerly general secretion pathway, GSP) for the export of folded proteins across the outer membrane. The protein is Putative type II secretion system C-type protein YghF of Escherichia coli (strain K12).